The following is a 337-amino-acid chain: Methylthioribose-1-phosphate isomerase (337 aa).

Substrate-binding positions include arginine 47–alanine 49, arginine 81, and glutamine 184. Aspartate 225 functions as the Proton donor in the catalytic mechanism. Position 235–236 (asparagine 235–lysine 236) interacts with substrate.

Belongs to the eIF-2B alpha/beta/delta subunits family. MtnA subfamily.

The catalysed reaction is 5-(methylsulfanyl)-alpha-D-ribose 1-phosphate = 5-(methylsulfanyl)-D-ribulose 1-phosphate. It participates in amino-acid biosynthesis; L-methionine biosynthesis via salvage pathway; L-methionine from S-methyl-5-thio-alpha-D-ribose 1-phosphate: step 1/6. Catalyzes the interconversion of methylthioribose-1-phosphate (MTR-1-P) into methylthioribulose-1-phosphate (MTRu-1-P). The protein is Methylthioribose-1-phosphate isomerase of Synechococcus sp. (strain CC9605).